We begin with the raw amino-acid sequence, 437 residues long: Protein translocase subunit SecY (437 aa).

A run of 10 helical transmembrane segments spans residues 19–39 (LFTL…IPGV), 69–89 (LLQI…SIIL), 122–142 (VALA…APLF), 157–177 (IFTT…VMWL), 189–209 (GMSI…LWAI), 219–239 (WIEF…VVFV), 276–296 (VIPV…AQFA), 316–336 (PIYI…YVAI), 378–398 (GSLY…GFGA), and 400–420 (QNFP…LETV).

Belongs to the SecY/SEC61-alpha family. In terms of assembly, component of the Sec protein translocase complex. Heterotrimer consisting of SecY, SecE and SecG subunits. The heterotrimers can form oligomers, although 1 heterotrimer is thought to be able to translocate proteins. Interacts with the ribosome. Interacts with SecDF, and other proteins may be involved. Interacts with SecA.

Its subcellular location is the cell membrane. Its function is as follows. The central subunit of the protein translocation channel SecYEG. Consists of two halves formed by TMs 1-5 and 6-10. These two domains form a lateral gate at the front which open onto the bilayer between TMs 2 and 7, and are clamped together by SecE at the back. The channel is closed by both a pore ring composed of hydrophobic SecY resides and a short helix (helix 2A) on the extracellular side of the membrane which forms a plug. The plug probably moves laterally to allow the channel to open. The ring and the pore may move independently. This Streptomyces galbus protein is Protein translocase subunit SecY.